A 412-amino-acid chain; its full sequence is Probable serine/threonine-protein kinase PBL4 (412 aa).

G2 carries N-myristoyl glycine lipidation. C4 is lipidated: S-palmitoyl cysteine. Residues 14–40 form a disordered region; it reads RESPYRGSSRISAKRSQSSRLSSLTIQ. The segment covering 21–40 has biased composition (low complexity); sequence SSRISAKRSQSSRLSSLTIQ. The residue at position 72 (T72) is a Phosphothreonine. The Protein kinase domain occupies 83 to 369; sequence FRPDSVIGEG…STLEELEMTL (287 aa). ATP contacts are provided by residues 89–97 and K121; that span reads IGEGGFGYV. At Y167 the chain carries Phosphotyrosine. D215 functions as the Proton acceptor in the catalytic mechanism. 2 positions are modified to phosphoserine: S219 and S249. 2 positions are modified to phosphothreonine: T250 and T255. Y263 is subject to Phosphotyrosine.

This sequence belongs to the protein kinase superfamily. Ser/Thr protein kinase family.

The protein resides in the cell membrane. It catalyses the reaction L-seryl-[protein] + ATP = O-phospho-L-seryl-[protein] + ADP + H(+). The catalysed reaction is L-threonyl-[protein] + ATP = O-phospho-L-threonyl-[protein] + ADP + H(+). Functionally, may be involved in plant defense signaling. This is Probable serine/threonine-protein kinase PBL4 from Arabidopsis thaliana (Mouse-ear cress).